A 552-amino-acid chain; its full sequence is Beta-hexosaminidase A (552 aa).

The signal sequence occupies residues 1 to 15 (MRLIVLSLLFTSTLA). N-linked (GlcNAc...) asparagine glycosylation is present at Asn44. Glu322 serves as the catalytic Proton donor. N-linked (GlcNAc...) asparagine glycans are attached at residues Asn348, Asn409, and Asn457.

This sequence belongs to the glycosyl hydrolase 20 family.

It is found in the lysosome. The catalysed reaction is Hydrolysis of terminal non-reducing N-acetyl-D-hexosamine residues in N-acetyl-beta-D-hexosaminides.. Responsible for the degradation of GM2 gangliosides, and a variety of other molecules containing terminal N-acetyl hexosamines. Degrades chitotriose. The chain is Beta-hexosaminidase A from Caenorhabditis briggsae.